The sequence spans 514 residues: ATP synthase subunit alpha (514 aa).

Position 170 to 177 (170 to 177 (GDRQTGKT)) interacts with ATP.

This sequence belongs to the ATPase alpha/beta chains family. F-type ATPases have 2 components, CF(1) - the catalytic core - and CF(0) - the membrane proton channel. CF(1) has five subunits: alpha(3), beta(3), gamma(1), delta(1), epsilon(1). CF(0) has three main subunits: a(1), b(2) and c(9-12). The alpha and beta chains form an alternating ring which encloses part of the gamma chain. CF(1) is attached to CF(0) by a central stalk formed by the gamma and epsilon chains, while a peripheral stalk is formed by the delta and b chains.

The protein localises to the cell inner membrane. It catalyses the reaction ATP + H2O + 4 H(+)(in) = ADP + phosphate + 5 H(+)(out). Functionally, produces ATP from ADP in the presence of a proton gradient across the membrane. The alpha chain is a regulatory subunit. The polypeptide is ATP synthase subunit alpha (Acidithiobacillus ferrooxidans (strain ATCC 23270 / DSM 14882 / CIP 104768 / NCIMB 8455) (Ferrobacillus ferrooxidans (strain ATCC 23270))).